The primary structure comprises 225 residues: UPF0758 protein BcerKBAB4_4299 (225 aa).

The 123-residue stretch at serine 103–isoleucine 225 folds into the MPN domain. 3 residues coordinate Zn(2+): histidine 174, histidine 176, and aspartate 187. The short motif at histidine 174 to aspartate 187 is the JAMM motif element.

It belongs to the UPF0758 family.

This Bacillus mycoides (strain KBAB4) (Bacillus weihenstephanensis) protein is UPF0758 protein BcerKBAB4_4299.